We begin with the raw amino-acid sequence, 624 residues long: Kelch-like ECH-associated protein 1 (624 aa).

S-(2-succinyl)cysteine is present on C38. The BTB domain occupies 77–149 (CDVTLQVKYE…AYTASISVGE (73 aa)). An N5-[4-(S-L-cysteinyl)-5-methyl-1H-imidazol-2-yl]-L-ornithine (Arg-Cys) (interchain with C-151 in KEAP1) cross-link involves residue R135. Position 151 is an S-(2,3-dicarboxypropyl)cysteine; alternate (C151). Residue C151 is modified to S-(2-succinyl)cysteine; alternate. C151 is subject to S-nitrosocysteine; alternate. C151 is covalently cross-linked (N5-[4-(S-L-cysteinyl)-5-methyl-1H-imidazol-2-yl]-L-ornithine (Cys-Arg) (interchain with R-135 in KEAP1)). Residues 184 to 286 (AIGIANFAEQ…TPRFLQTQLQ (103 aa)) enclose the BACK domain. C241 is modified (S-(2-succinyl)cysteine). Residues C257 and C273 each carry the S-(2,3-dicarboxypropyl)cysteine modification. Position 288 is an S-(2,3-dicarboxypropyl)cysteine; alternate (C288). S-(2-succinyl)cysteine; alternate is present on C288. Position 319 is an S-(2-succinyl)cysteine (C319). Kelch repeat units lie at residues 327–372 (LIYT…VVGG), 373–423 (LLYA…VIDG), 424–470 (HIYA…VLNR), 471–517 (LLYA…VLHN), 519–564 (IYAA…VHQG), and 565–611 (KIYV…VTME). Position 434 is an S-cGMP-cysteine (C434). C613 carries the post-translational modification S-(2-succinyl)cysteine.

This sequence belongs to the KEAP1 family. Component of the BCR(KEAP1) E3 ubiquitin ligase complex, at least composed of 2 molecules of CUL3, 2 molecules of KEAP1, and RBX1. Interacts with NFE2L2/NRF2; the interaction is direct. Forms a ternary complex with NFE2L2/NRF2 and PGAM5. Interacts with (phosphorylated) SQSTM1/p62; the interaction is direct and inactivates the BCR(KEAP1) complex by sequestering it in inclusion bodies, promoting its degradation. Interacts with NFE2L1. Interacts with BPTF and PTMA. Interacts with MAP1LC3B. Interacts indirectly with ENC1. Interacts with SESN1 and SESN2. Interacts with HSP90AA1 and HSP90AB1. Interacts with PGCKA1; this interaction prevents the ubiquitination of KEAP1 by TRIM25, thus protecting KEAP1 from degradation. Post-translationally, non-enzymatic covalent modifications of reactive cysteines by electrophile metabolites inactivate the BCR(KEAP1) complex. Accumulation of fumarate promotes the formation of cysteine S-succination (S-(2-succinyl)cysteine), leading to inactivate the BCR(KEAP1) complex and promote NFE2L2/NRF2 nuclear accumulation and activation. Nitric oxide-dependent 8-Nitro-cGMP formation promotes cysteine guanylation (S-cGMP-cysteine), leading to NFE2L2/NRF2 nuclear accumulation and activation. Itaconate, an anti-inflammatory metabolite generated in response to lipopolysaccharide, alkylates cysteines, activating NFE2L2/NRF2. Methylglyoxal, a reactive metabolite that accumulates when the glycolytic enzyme PGK1 is inhibited, promotes formation of a methylimidazole cross-link between proximal Cys-151 and Arg-135 on another KEAP1 molecule, resulting in an inactive dimer that inactivates the BCR(KEAP1) complex. In terms of processing, degraded via a proteasomal-independent process during selective autophagy: interaction with phosphorylated SQSTM1/p62 sequesters KEAP1 in inclusion bodies, leading to its degradation. Auto-ubiquitinated by the BCR(KEAP1) complex. Quinone-induced oxidative stress, but not sulforaphane, increases its ubiquitination. Ubiquitination and subsequent degradation is most pronounced following prolonged exposure of cells to oxidative stress, particularly in glutathione-deficient cells that are highly susceptible to oxidative stress. Deubiquitinated by USP25; leading to stabilization. Ubiquitinated by TRIM25; leading to degradation upon ER stress.

Its subcellular location is the cytoplasm. It localises to the nucleus. It participates in protein modification; protein ubiquitination. Its activity is regulated as follows. Ubiquitin ligase activity of the BCR(KEAP1) complex is inhibited by oxidative stress and electrophile metabolites such as sulforaphane. Electrophile metabolites react with reactive cysteine residues in KEAP1 and trigger non-enzymatic covalent modifications of these cysteine residues, leading to inactivate the ubiquitin ligase activity of the BCR(KEAP1) complex. Selective autophagy also inactivates the BCR(KEAP1) complex via interaction between KEAP1 and SQSTM1/p62, which sequesters the complex in inclusion bodies and promotes its degradation. Functionally, substrate-specific adapter of a BCR (BTB-CUL3-RBX1) E3 ubiquitin ligase complex that regulates the response to oxidative stress by targeting NFE2L2/NRF2 for ubiquitination. KEAP1 acts as a key sensor of oxidative and electrophilic stress: in normal conditions, the BCR(KEAP1) complex mediates ubiquitination and degradation of NFE2L2/NRF2, a transcription factor regulating expression of many cytoprotective genes. In response to oxidative stress, different electrophile metabolites trigger non-enzymatic covalent modifications of highly reactive cysteine residues in KEAP1, leading to inactivate the ubiquitin ligase activity of the BCR(KEAP1) complex, promoting NFE2L2/NRF2 nuclear accumulation and expression of phase II detoxifying enzymes. In response to selective autophagy, KEAP1 is sequestered in inclusion bodies following its interaction with SQSTM1/p62, leading to inactivation of the BCR(KEAP1) complex and activation of NFE2L2/NRF2. The BCR(KEAP1) complex also mediates ubiquitination of SQSTM1/p62, increasing SQSTM1/p62 sequestering activity and degradation. The BCR(KEAP1) complex also targets BPTF and PGAM5 for ubiquitination and degradation by the proteasome. This chain is Kelch-like ECH-associated protein 1, found in Mus musculus (Mouse).